A 488-amino-acid chain; its full sequence is Malonate-semialdehyde dehydrogenase (488 aa).

Alanine 150, phenylalanine 152, lysine 176, glutamate 179, arginine 180, serine 229, and threonine 251 together coordinate NAD(+). The active-site Nucleophile is the cysteine 284. Glutamate 382 contacts NAD(+).

The protein belongs to the aldehyde dehydrogenase family. IolA subfamily. Homotetramer.

The enzyme catalyses 3-oxopropanoate + NAD(+) + CoA + H2O = hydrogencarbonate + acetyl-CoA + NADH + H(+). It carries out the reaction 2-methyl-3-oxopropanoate + NAD(+) + CoA + H2O = propanoyl-CoA + hydrogencarbonate + NADH + H(+). Its pathway is polyol metabolism; myo-inositol degradation into acetyl-CoA; acetyl-CoA from myo-inositol: step 7/7. In terms of biological role, catalyzes the oxidation of malonate semialdehyde (MSA) and methylmalonate semialdehyde (MMSA) into acetyl-CoA and propanoyl-CoA, respectively. Is involved in a myo-inositol catabolic pathway. Bicarbonate, and not CO2, is the end-product of the enzymatic reaction. This Listeria monocytogenes serotype 4b (strain F2365) protein is Malonate-semialdehyde dehydrogenase.